Here is a 230-residue protein sequence, read N- to C-terminus: Small ribosomal subunit protein uS3 (230 aa).

The 69-residue stretch at Val39–Lys107 folds into the KH type-2 domain.

Belongs to the universal ribosomal protein uS3 family. In terms of assembly, part of the 30S ribosomal subunit. Forms a tight complex with proteins S10 and S14.

Binds the lower part of the 30S subunit head. Binds mRNA in the 70S ribosome, positioning it for translation. In Vesicomyosocius okutanii subsp. Calyptogena okutanii (strain HA), this protein is Small ribosomal subunit protein uS3.